The chain runs to 479 residues: Pre-glycoprotein polyprotein GP complex (479 aa).

Gly-2 carries N-myristoyl glycine; by host lipidation. At Gly-2–Glu-17 the chain is on the extracellular side. The helical transmembrane segment at Ala-18–Ile-32 threads the bilayer. A topological domain (cytoplasmic) is located at residue Lys-33. The helical transmembrane segment at Gly-34–Ala-53 threads the bilayer. Extracellular segments lie at residues Gly-54–Ser-58 and Phe-59–Asp-418. Residue Cys-57 participates in Zn(2+) binding. 3 cysteine pairs are disulfide-bonded: Cys-85/Cys-221, Cys-265/Cys-278, and Cys-287/Cys-296. N-linked (GlcNAc...) asparagine; by host glycans are attached at residues Asn-88, Asn-125, Asn-174, Asn-202, and Asn-214. N-linked (GlcNAc...) asparagine; by host glycans are attached at residues Asn-314, Asn-351, Asn-359, Asn-376, and Asn-381. Cys-350 and Cys-371 form a disulfide bridge. A helical membrane pass occupies residues Leu-419 to Pro-439. Residues Thr-440 to His-479 are Cytoplasmic-facing. Zn(2+) contacts are provided by His-441, His-443, Cys-449, His-453, Cys-461, Cys-463, and His-479.

It belongs to the arenaviridae GPC protein family. In terms of assembly, homotetramer; disulfide-linked. As to quaternary structure, homotetramer. GP2 homotetramers bind through ionic interactions with GP1 homotetramers to form the GP complex together with the stable signal peptide. The GP-C polyprotein interacts with the host protease MBTPS1/SKI-1 resulting in the polyprotein processing. In terms of processing, specific enzymatic cleavages in vivo yield mature proteins. GP-C polyprotein is cleaved in the endoplasmic reticulum by the host protease MBTPS1. Only cleaved glycoprotein is incorporated into virions. The SSP remains stably associated with the GP complex following cleavage by signal peptidase and plays crucial roles in the trafficking of GP through the secretory pathway. Post-translationally, myristoylation is necessary for GP2-mediated fusion activity.

It is found in the virion membrane. The protein localises to the host endoplasmic reticulum membrane. The protein resides in the host Golgi apparatus membrane. It localises to the host cell membrane. In terms of biological role, interacts with the host receptor. Mediates virus attachment to host TFRC. This attachment induces virion internalization predominantly through clathrin-mediated endocytosis. Class I viral fusion protein that directs fusion of viral and host endosomal membranes, leading to delivery of the nucleocapsid into the cytoplasm. Membrane fusion is mediated by irreversible conformational changes induced upon acidification in the endosome. Its function is as follows. Stable signal peptide (SSP): cleaved and functions as a signal peptide. In addition, it is also retained as the third component of the GP complex. The SSP is required for efficient glycoprotein expression, post-translational maturation cleavage of GP1 and GP2, glycoprotein transport to the cell surface plasma membrane, formation of infectious virus particles, and acid pH-dependent glycoprotein-mediated cell fusion. The sequence is that of Pre-glycoprotein polyprotein GP complex from Homo sapiens (Human).